Here is a 61-residue protein sequence, read N- to C-terminus: Large ribosomal subunit protein uL30 (61 aa).

Belongs to the universal ribosomal protein uL30 family. In terms of assembly, part of the 50S ribosomal subunit.

In Lactobacillus acidophilus (strain ATCC 700396 / NCK56 / N2 / NCFM), this protein is Large ribosomal subunit protein uL30.